A 326-amino-acid chain; its full sequence is Flap endonuclease 1 (326 aa).

The interval 1–100 is N-domain; it reads MGNAALRQLA…EEVQERRVAR (100 aa). Mg(2+) contacts are provided by D28, D82, E154, E156, D175, D177, and D225. The tract at residues 118-246 is I-domain; that stretch reads AASRLEARTQ…TAISAINDHG (129 aa). Residues 318–326 are interaction with PCNA; sequence VQTGLDEWI.

The protein belongs to the XPG/RAD2 endonuclease family. FEN1 subfamily. As to quaternary structure, interacts with PCNA. PCNA stimulates the nuclease activity without altering cleavage specificity. Mg(2+) is required as a cofactor.

Structure-specific nuclease with 5'-flap endonuclease and 5'-3' exonuclease activities involved in DNA replication and repair. During DNA replication, cleaves the 5'-overhanging flap structure that is generated by displacement synthesis when DNA polymerase encounters the 5'-end of a downstream Okazaki fragment. Binds the unpaired 3'-DNA end and kinks the DNA to facilitate 5' cleavage specificity. Cleaves one nucleotide into the double-stranded DNA from the junction in flap DNA, leaving a nick for ligation. Also involved in the base excision repair (BER) pathway. Acts as a genome stabilization factor that prevents flaps from equilibrating into structures that lead to duplications and deletions. Also possesses 5'-3' exonuclease activity on nicked or gapped double-stranded DNA. In Haloquadratum walsbyi (strain DSM 16790 / HBSQ001), this protein is Flap endonuclease 1.